Here is a 351-residue protein sequence, read N- to C-terminus: Prostaglandin reductase 2 (351 aa).

A substrate-binding site is contributed by 99 to 100; the sequence is FY. Residues 165–168, Lys-192, Tyr-208, Asn-231, 253–259, 287–289, and Asn-337 each bind NADP(+); these read GACG, CGQISQY, and FLV. 288–290 lines the substrate pocket; the sequence is LVL.

Belongs to the NADP-dependent oxidoreductase L4BD family. Monomer. As to expression, widely expressed.

The protein resides in the cytoplasm. It carries out the reaction 13,14-dihydro-15-oxo-prostaglandin E2 + NAD(+) = 15-oxoprostaglandin E2 + NADH + H(+). It catalyses the reaction 13,14-dihydro-15-oxo-prostaglandin E2 + NADP(+) = 15-oxoprostaglandin E2 + NADPH + H(+). The enzyme catalyses 13,14-dihydro-15-oxo-PGF2alpha + NADP(+) = 15-oxoprostaglandin F2alpha + NADPH + H(+). The catalysed reaction is 13,14-dihydro-15-oxo-prostaglandin E1 + NADP(+) = 15-oxoprostaglandin E1 + NADPH + H(+). It carries out the reaction 13,14-dihydro-15-oxo-prostaglandin F1alpha + NADP(+) = 15-oxoprostaglandin F1alpha + NADPH + H(+). Functionally, functions as 15-oxo-prostaglandin 13-reductase and acts on 15-keto-PGE1, 15-keto-PGE2, 15-keto-PGE1-alpha and 15-keto-PGE2-alpha with highest activity towards 15-keto-PGE2. Overexpression represses transcriptional activity of PPARG and inhibits adipocyte differentiation. In Homo sapiens (Human), this protein is Prostaglandin reductase 2.